The following is an 85-amino-acid chain: Small ribosomal subunit protein bS18c (85 aa).

It belongs to the bacterial ribosomal protein bS18 family. As to quaternary structure, part of the 30S ribosomal subunit.

It localises to the plastid. Its subcellular location is the chloroplast. This Zygnema circumcarinatum (Green alga) protein is Small ribosomal subunit protein bS18c.